The primary structure comprises 556 residues: Guanosine-diphosphatase (556 aa).

Residues Met1–Lys12 are Cytoplasmic-facing. The chain crosses the membrane as a helical; Signal-anchor for type II membrane protein span at residues Ala13 to Gly33. Residues Ser34–Ile556 are Lumenal-facing. The active-site Proton acceptor is the Glu256. Residue Asn372 is glycosylated (N-linked (GlcNAc...) asparagine).

It belongs to the GDA1/CD39 NTPase family. Ca(2+) is required as a cofactor. The cofactor is Mn(2+).

It localises to the golgi apparatus membrane. It carries out the reaction GDP + H2O = GMP + phosphate + H(+). The protein operates within protein modification; protein glycosylation. In terms of biological role, after transfer of sugars to endogenous macromolecular acceptors, the enzyme converts nucleoside diphosphates to nucleoside monophosphates which in turn exit the Golgi lumen in a coupled antiporter reaction, allowing entry of additional nucleotide sugar from the cytosol. This chain is Guanosine-diphosphatase (gdp1), found in Schizosaccharomyces pombe (strain 972 / ATCC 24843) (Fission yeast).